We begin with the raw amino-acid sequence, 339 residues long: Probable scoulerine-9-O-methyltransferase OMT3B (339 aa).

Position 161 (Met161) interacts with S-adenosyl-L-methionine. Position 164 (Asp164) interacts with substrate. S-adenosyl-L-methionine is bound by residues Thr165, Gly191, Asp214, Asp228–Val229, and Lys242. Position 243–247 (Ser243–Glu247) interacts with substrate. His246 acts as the Proton acceptor in catalysis.

This sequence belongs to the class I-like SAM-binding methyltransferase superfamily. Cation-independent O-methyltransferase family. COMT subfamily.

It catalyses the reaction (S)-scoulerine + S-adenosyl-L-methionine = (S)-tetrahydrocolumbamine + S-adenosyl-L-homocysteine + H(+). It participates in alkaloid biosynthesis. In terms of biological role, methyltransferase involved in the biosynthesis of the benzylisoquinoline alkaloid noscapine. Catalyzes the conversion of (S)-scoulerine to (S)-tetrahydrocolumbamine. The protein is Probable scoulerine-9-O-methyltransferase OMT3B of Papaver somniferum (Opium poppy).